A 275-amino-acid polypeptide reads, in one-letter code: AA9 family lytic polysaccharide monooxygenase D (275 aa).

The N-terminal stretch at 1–17 (MKLSLLAIAAIAPFVSA) is a signal peptide. The Cu(2+) site is built by H18 and H101. Cysteines 67 and 189 form a disulfide. An O2-binding site is contributed by H176. Y186 provides a ligand contact to Cu(2+). N220 carries N-linked (GlcNAc...) asparagine glycosylation.

It belongs to the polysaccharide monooxygenase AA9 family. It depends on Cu(2+) as a cofactor.

The protein localises to the secreted. It catalyses the reaction [(1-&gt;4)-beta-D-glucosyl]n+m + reduced acceptor + O2 = 4-dehydro-beta-D-glucosyl-[(1-&gt;4)-beta-D-glucosyl]n-1 + [(1-&gt;4)-beta-D-glucosyl]m + acceptor + H2O.. Lytic polysaccharide monooxygenase (LPMO) that depolymerizes crystalline and amorphous polysaccharides via the oxidation of scissile alpha- or beta-(1-4)-glycosidic bonds, yielding C1 or C4 oxidation products. Catalysis by LPMOs requires the reduction of the active-site copper from Cu(II) to Cu(I) by a reducing agent and H(2)O(2) or O(2) as a cosubstrate. In Aspergillus tamarii, this protein is AA9 family lytic polysaccharide monooxygenase D.